We begin with the raw amino-acid sequence, 1095 residues long: Collagen, type I, alpha 1a (1095 aa).

The segment covering 1–21 (SPAMPVPGPMGPMGPRGPPGS) has biased composition (pro residues). A disordered region spans residues 1–1011 (SPAMPVPGPM…QPQEKAPDPY (1011 aa)). A compositionally biased stretch (low complexity) spans 22-49 (PGASGPQGFTGPPGEPGEAGSAGAMGPR). The span at 58 to 72 (NGEDGESGKPGRGGE) shows a compositional bias: basic and acidic residues. Over residues 127–145 (TGAAGAAGARGNDGAAGAA) the composition is skewed to low complexity. Residues 147-160 (PPGPTGPAGPPGFP) are compositionally biased toward pro residues. Over residues 161–179 (GGPGAKGDAGAQGGRGPEG) the composition is skewed to gly residues. Composition is skewed to low complexity over residues 180-223 (PAGA…AGAP), 232-270 (SGPQGAAGAPGPKGNTGEVGAPGAKGEAGAKGEAGAPGV), and 288-297 (EPGAAGARGA). Positions 299 to 311 (GERGGPGGRGFPG) are enriched in gly residues. 4 stretches are compositionally biased toward low complexity: residues 385–400 (VGARGQPGVMGFPGPK), 477–489 (LPGEAGATGPAGA), 498–544 (ERGA…QGMP), and 577–592 (RGLTGPLGLPGPAGAT). Positions 602–611 (GPVGPGGARG) are enriched in gly residues. Composition is skewed to low complexity over residues 625–661 (AGFAGPPGADGQPGAKGEAGDNGAKGDAGPPGAAGPT) and 675–697 (PKGARGAAGPPGATGFPGAAGRV). A compositionally biased stretch (pro residues) spans 699–712 (PPGPSGNPGPPGPA). The segment covering 804–822 (PGLAGAPGEPGREGSPGNE) has biased composition (low complexity). The span at 848-858 (APGPPGAPGPV) shows a compositional bias: pro residues. Positions 872–893 (PAGPAGSAGPAGPRGPAGALGL) are enriched in low complexity. A compositionally biased stretch (basic and acidic residues) spans 894–908 (RGDKGESGEAGERGM). Positions 924–960 (AGSSGEQGPAGAAGPAGPRGPAGSAGSPGKDGMSGLP) are enriched in low complexity. Over residues 976 to 988 (AGPPGPPGPPGAP) the composition is skewed to pro residues. Residues 1062-1095 (TGTWGKLPLLDLAPMDVGAPDQEFGLEVGPVCFL) enclose the Fibrillar collagen NC1 domain.

It belongs to the fibrillar collagen family.

It localises to the secreted. It is found in the extracellular space. The protein localises to the extracellular matrix. This Epinephelus caninus (Dogtooth grouper) protein is Collagen, type I, alpha 1a.